The primary structure comprises 238 residues: Riboflavin synthase (238 aa).

Lumazine-binding repeat units lie at residues 1-103 and 104-205; these read MFTG…FGGH and YVQG…EKQI. 2,4-dihydroxypteridine-binding positions include 4–6, 54–56, and 68–73; these read GIV, CLT, and GISPET. The residue at position 95 (S95) is a Phosphoserine. 2,4-dihydroxypteridine is bound by residues 107 to 109, K143, 152 to 154, and 170 to 175; these read GHV, SLT, and SMIKHT.

Homotrimer.

It carries out the reaction 2 6,7-dimethyl-8-(1-D-ribityl)lumazine + H(+) = 5-amino-6-(D-ribitylamino)uracil + riboflavin. It participates in cofactor biosynthesis; riboflavin biosynthesis; riboflavin from 2-hydroxy-3-oxobutyl phosphate and 5-amino-6-(D-ribitylamino)uracil: step 2/2. In terms of biological role, catalyzes the dismutation of two molecules of 6,7-dimethyl-8-ribityllumazine, resulting in the formation of riboflavin and 5-amino-6-(D-ribitylamino)uracil. This Saccharomyces cerevisiae (strain ATCC 204508 / S288c) (Baker's yeast) protein is Riboflavin synthase.